A 141-amino-acid polypeptide reads, in one-letter code: Auxin-responsive protein SAUR63 (141 aa).

The protein belongs to the ARG7 family. As to expression, expressed in hypocotyls, cotyledons, petioles, young rosette leaves, apical portion of inflorescence stems, stamen filaments and petals.

Its subcellular location is the cell membrane. In terms of biological role, may promote auxin-stimulated organ elongation, such as hypocotyls, stamen filaments and petals. In Arabidopsis thaliana (Mouse-ear cress), this protein is Auxin-responsive protein SAUR63.